Here is a 315-residue protein sequence, read N- to C-terminus: Ribose-phosphate pyrophosphokinase (315 aa).

ATP-binding positions include 37-39 (DGE) and 96-97 (RQ). Mg(2+) contacts are provided by His131 and Asp170. Lys194 is a catalytic residue. D-ribose 5-phosphate is bound by residues Arg196, Asp220, and 224–228 (DTGGT).

This sequence belongs to the ribose-phosphate pyrophosphokinase family. Class I subfamily. As to quaternary structure, homohexamer. It depends on Mg(2+) as a cofactor.

It localises to the cytoplasm. The catalysed reaction is D-ribose 5-phosphate + ATP = 5-phospho-alpha-D-ribose 1-diphosphate + AMP + H(+). The protein operates within metabolic intermediate biosynthesis; 5-phospho-alpha-D-ribose 1-diphosphate biosynthesis; 5-phospho-alpha-D-ribose 1-diphosphate from D-ribose 5-phosphate (route I): step 1/1. Functionally, involved in the biosynthesis of the central metabolite phospho-alpha-D-ribosyl-1-pyrophosphate (PRPP) via the transfer of pyrophosphoryl group from ATP to 1-hydroxyl of ribose-5-phosphate (Rib-5-P). In Photorhabdus laumondii subsp. laumondii (strain DSM 15139 / CIP 105565 / TT01) (Photorhabdus luminescens subsp. laumondii), this protein is Ribose-phosphate pyrophosphokinase.